The following is a 236-amino-acid chain: Protein-S-isoprenylcysteine O-methyltransferase (236 aa).

The next 4 membrane-spanning stretches (helical) occupy residues 3 to 23 (NLHT…LGCV), 24 to 44 (FGLG…FFAF), 76 to 96 (AYWL…GKSF), and 108 to 128 (FLIN…LCLG). Residues 155–158 (HLLV), tyrosine 163, and 168–171 (HPSY) contribute to the S-adenosyl-L-methionine site. A helical transmembrane segment spans residues 174–194 (FFIWALGTQMLLGNFVSTLLF). Arginine 205 contacts substrate. Glutamate 209 contributes to the S-adenosyl-L-methionine binding site.

Belongs to the class VI-like SAM-binding methyltransferase superfamily. Isoprenylcysteine carboxyl methyltransferase family.

Its subcellular location is the membrane. It catalyses the reaction [protein]-C-terminal S-[(2E,6E)-farnesyl]-L-cysteine + S-adenosyl-L-methionine = [protein]-C-terminal S-[(2E,6E)-farnesyl]-L-cysteine methyl ester + S-adenosyl-L-homocysteine. Its function is as follows. Mediates C-terminal methylation of the isoprenylated C-terminal cysteine in M-factor. In Schizosaccharomyces pombe (strain 972 / ATCC 24843) (Fission yeast), this protein is Protein-S-isoprenylcysteine O-methyltransferase (mam4).